The sequence spans 1195 residues: Zinc finger and BTB domain-containing protein 38 (1195 aa).

In terms of domain architecture, BTB spans cysteine 33 to arginine 100. Lysine 43 is covalently cross-linked (Glycyl lysine isopeptide (Lys-Gly) (interchain with G-Cter in SUMO2)). At serine 130 the chain carries Phosphoserine. Residues lysine 145, lysine 148, lysine 151, and lysine 259 each participate in a glycyl lysine isopeptide (Lys-Gly) (interchain with G-Cter in SUMO2) cross-link. The disordered stretch occupies residues arginine 264 to alanine 334. The segment covering serine 270–glutamate 280 has biased composition (polar residues). The interval proline 300–glutamate 523 is interaction with CBFA2T3. Serine 309 is modified (phosphoserine). Basic and acidic residues predominate over residues glycine 314–glutamate 323. The segment at tyrosine 342–histidine 364 adopts a C2H2-type 1 zinc-finger fold. The C2H2-type 2; degenerate zinc finger occupies leucine 371–arginine 395. 3 consecutive C2H2-type zinc fingers follow at residues tyrosine 460 to histidine 482, tyrosine 488 to histidine 510, and tyrosine 516 to histidine 539. Residues lysine 550, lysine 557, lysine 754, lysine 758, lysine 763, lysine 804, lysine 814, lysine 821, lysine 842, lysine 850, and lysine 857 each participate in a glycyl lysine isopeptide (Lys-Gly) (interchain with G-Cter in SUMO2) cross-link. Positions serine 745 to lysine 804 are disordered. Residues leucine 753–glycine 765 are compositionally biased toward basic and acidic residues. Disordered regions lie at residues glutamine 871–leucine 891 and phenylalanine 903–tyrosine 922. Residues lysine 923, lysine 964, lysine 969, lysine 977, lysine 981, lysine 991, lysine 1017, and lysine 1026 each participate in a glycyl lysine isopeptide (Lys-Gly) (interchain with G-Cter in SUMO2) cross-link. 5 consecutive C2H2-type zinc fingers follow at residues tyrosine 1010–histidine 1032, tyrosine 1038–histidine 1060, phenylalanine 1066–histidine 1088, tyrosine 1094–histidine 1116, and tyrosine 1125–histidine 1147. Glycyl lysine isopeptide (Lys-Gly) (interchain with G-Cter in SUMO2) cross-links involve residues lysine 1109, lysine 1132, lysine 1135, lysine 1150, and lysine 1183.

In terms of assembly, interacts with CBFA2T3. Interacts with ZBTB4. Interacts with RBBP6. In terms of processing, ubiquitinated by RBBP6; leading to its degradation by the proteasome.

It localises to the nucleus. Its subcellular location is the chromosome. Its function is as follows. Transcriptional regulator with bimodal DNA-binding specificity. Binds with a higher affinity to methylated CpG dinucleotides in the consensus sequence 5'-CGCG-3' but can also bind to E-box elements (5'-CACGTG-3'). Can also bind specifically to a single methyl-CpG pair. Represses transcription in a methyl-CpG-dependent manner. Plays an important role in regulating DNA replication and common fragile sites (CFS) stability in a RBBP6- and MCM10-dependent manner; represses expression of MCM10 which plays an important role in DNA-replication. Acts as a transcriptional activator. May be involved in the differentiation and/or survival of late postmitotic neurons. This is Zinc finger and BTB domain-containing protein 38 from Homo sapiens (Human).